The sequence spans 1432 residues: uncharacterized protein (1432 aa).

Disordered stretches follow at residues 1-72, 208-237, 280-335, 531-607, 690-712, 738-801, 896-950, 1044-1076, and 1303-1359; these read MDTI…NYYN, NKIE…NNGQ, ERNE…ENNL, IVKS…NNSS, QNKS…TTTT, NNTL…NGGR, QSNN…SPPT, NINS…NNNN, and NNNN…NTTP. 3 stretches are compositionally biased toward low complexity: residues 14–72, 208–225, and 284–300; these read INNN…NYYN, NKIE…NNEN, and LTSP…LPSS. The segment covering 315–325 has biased composition (acidic residues); it reads QEEEEEEEEED. Composition is skewed to low complexity over residues 536–575, 583–607, 691–712, 744–779, and 896–944; these read SSSN…NKNK, DNNT…NNSS, NKSP…TTTT, NMNN…NSNN, and QSNN…SSSN. Over residues 1311 to 1320 the composition is skewed to gly residues; the sequence is NGNGNGGING. Positions 1321-1333 are enriched in low complexity; sequence NNGNNSGSNNKEN. Gly residues predominate over residues 1334-1346; it reads GGTGAGIGGGGGL. Over residues 1347 to 1359 the composition is skewed to low complexity; sequence QLPNNNNNNNTTP.

This is an uncharacterized protein from Dictyostelium discoideum (Social amoeba).